Consider the following 261-residue polypeptide: Cytochrome c oxidase subunit 3 (261 aa).

Residues 1 to 15 (MTHQTHACHMVNPSP) lie on the Mitochondrial matrix side of the membrane. A helical membrane pass occupies residues 16–34 (WPLTGALSGLLMTSGLIMW). Over 35 to 40 (FHFNST) the chain is Mitochondrial intermembrane. A helical membrane pass occupies residues 41-66 (TLLMLGLTTNMLTMYQWWRDVIREST). Over 67–72 (FQGHHT) the chain is Mitochondrial matrix. The helical transmembrane segment at 73 to 105 (PNVQKGLRYGMILFIISEVLFFTGFFWAFYHSS) threads the bilayer. The Mitochondrial intermembrane portion of the chain corresponds to 106 to 128 (LAPTPELGGCWPPTGIHPLNPLE). The chain crosses the membrane as a helical span at residues 129-152 (VPLLNTSVLLASGVSITWAHHSLM). Topologically, residues 153–155 (EGN) are mitochondrial matrix. A helical transmembrane segment spans residues 156–183 (RNHMLQALFITIALGVYFTLLQASEYYE). At 184–190 (APFTISD) the chain is on the mitochondrial intermembrane side. A helical membrane pass occupies residues 191–223 (GVYGSTFFVATGFHGLHVIIGSTFLIVCFFRQL). Residues 224–232 (KFHFTSSHH) lie on the Mitochondrial matrix side of the membrane. The helical transmembrane segment at 233–256 (FGFEAAAWYWHFVDVVWLFLYVSI) threads the bilayer. Residues 257-261 (YWWGS) are Mitochondrial intermembrane-facing.

This sequence belongs to the cytochrome c oxidase subunit 3 family. As to quaternary structure, component of the cytochrome c oxidase (complex IV, CIV), a multisubunit enzyme composed of 14 subunits. The complex is composed of a catalytic core of 3 subunits MT-CO1, MT-CO2 and MT-CO3, encoded in the mitochondrial DNA, and 11 supernumerary subunits COX4I, COX5A, COX5B, COX6A, COX6B, COX6C, COX7A, COX7B, COX7C, COX8 and NDUFA4, which are encoded in the nuclear genome. The complex exists as a monomer or a dimer and forms supercomplexes (SCs) in the inner mitochondrial membrane with NADH-ubiquinone oxidoreductase (complex I, CI) and ubiquinol-cytochrome c oxidoreductase (cytochrome b-c1 complex, complex III, CIII), resulting in different assemblies (supercomplex SCI(1)III(2)IV(1) and megacomplex MCI(2)III(2)IV(2)).

It is found in the mitochondrion inner membrane. It catalyses the reaction 4 Fe(II)-[cytochrome c] + O2 + 8 H(+)(in) = 4 Fe(III)-[cytochrome c] + 2 H2O + 4 H(+)(out). Its function is as follows. Component of the cytochrome c oxidase, the last enzyme in the mitochondrial electron transport chain which drives oxidative phosphorylation. The respiratory chain contains 3 multisubunit complexes succinate dehydrogenase (complex II, CII), ubiquinol-cytochrome c oxidoreductase (cytochrome b-c1 complex, complex III, CIII) and cytochrome c oxidase (complex IV, CIV), that cooperate to transfer electrons derived from NADH and succinate to molecular oxygen, creating an electrochemical gradient over the inner membrane that drives transmembrane transport and the ATP synthase. Cytochrome c oxidase is the component of the respiratory chain that catalyzes the reduction of oxygen to water. Electrons originating from reduced cytochrome c in the intermembrane space (IMS) are transferred via the dinuclear copper A center (CU(A)) of subunit 2 and heme A of subunit 1 to the active site in subunit 1, a binuclear center (BNC) formed by heme A3 and copper B (CU(B)). The BNC reduces molecular oxygen to 2 water molecules using 4 electrons from cytochrome c in the IMS and 4 protons from the mitochondrial matrix. The sequence is that of Cytochrome c oxidase subunit 3 (MT-CO3) from Gazella saudiya (Saudi gazelle).